The sequence spans 356 residues: DNA polymerase IV (356 aa).

One can recognise a UmuC domain in the interval 1-188 (MDTSRKIIHI…IPVTKFYGVG (188 aa)). 2 residues coordinate Mg(2+): D11 and D106. The active site involves E107.

The protein belongs to the DNA polymerase type-Y family. As to quaternary structure, monomer. Requires Mg(2+) as cofactor.

The protein resides in the cytoplasm. The catalysed reaction is DNA(n) + a 2'-deoxyribonucleoside 5'-triphosphate = DNA(n+1) + diphosphate. Poorly processive, error-prone DNA polymerase involved in untargeted mutagenesis. Copies undamaged DNA at stalled replication forks, which arise in vivo from mismatched or misaligned primer ends. These misaligned primers can be extended by PolIV. Exhibits no 3'-5' exonuclease (proofreading) activity. May be involved in translesional synthesis, in conjunction with the beta clamp from PolIII. This Listeria innocua serovar 6a (strain ATCC BAA-680 / CLIP 11262) protein is DNA polymerase IV.